Consider the following 99-residue polypeptide: U2-theraphotoxin-Lsp1a (99 aa).

The N-terminal stretch at 1–22 (MNTIQVIIFAVVLVLTVTVGQA) is a signal peptide. Positions 23–57 (DEDSPEASLLRKLKEAEASLFGQNLEESRNSRQKR) are excised as a propeptide. Cystine bridges form between cysteine 58/cysteine 73, cysteine 65/cysteine 78, and cysteine 72/cysteine 93.

The protein belongs to the neurotoxin 14 (magi-1) family. 08 (Ltx-4) subfamily. Expressed by the venom gland.

Its subcellular location is the secreted. Its function is as follows. Insecticidal neurotoxin. This is U2-theraphotoxin-Lsp1a from Lasiodora sp. (strain IBSP 8539) (Brazilian salmon pink birdeater).